Reading from the N-terminus, the 605-residue chain is Protein spinster (605 aa).

Positions 1 to 94 (MSLKHQKQSY…HPLGEHHHIP (94 aa)) are disordered. Residues 27-38 (SSGSSGSSSSEE) are compositionally biased toward low complexity. The segment covering 55 to 67 (TTYSSQQLMPSDT) has biased composition (polar residues). Basic residues predominate over residues 76–85 (RLRPHHHHHH). A helical membrane pass occupies residues 115-137 (FTVTVLCFVNLINYMDRFTIAGV). Residue asparagine 149 is glycosylated (N-linked (GlcNAc...) asparagine). The next 5 helical transmembrane spans lie at 153 to 173 (GLLQTVFVISYMVCAPIFGYL), 180 to 200 (PWIMAVGVGLWSTTTLLGSFM), 203 to 223 (FGWFIAFRALVGIGEASYSTI), 240 to 260 (MLALFYFAIPVGSGLGYIVGS), and 271 to 291 (WALRVTPILGIVAVFLILLIK). N-linked (GlcNAc...) asparagine glycosylation is present at asparagine 319. A run of 5 helical transmembrane segments spans residues 329–349 (FTCVAFVAGALAWWGPSFIYL), 367–387 (FNFGVITMLAGLLGVPLGSFL), 401–421 (VICAFGLLVSAPLLTGACLLV), 431–451 (LIFFGQLALNLNWAIVADILL), and 465–485 (FQILISHALGDAGSPYLVGAI). Asparagine 519 carries an N-linked (GlcNAc...) asparagine glycan. The chain crosses the membrane as a helical span at residues 558-578 (STSFVEVLGGIFFIFTACFII). N-linked (GlcNAc...) asparagine glycosylation is present at asparagine 583.

This sequence belongs to the major facilitator superfamily. Spinster (TC 2.A.1.49) family. In terms of tissue distribution, enriched in brain (at protein level).

The protein resides in the late endosome membrane. Its subcellular location is the lysosome membrane. Functionally, probable sphingolipid transporter that plays a central role in endosomes and/or lysosomes storage. Involved in TGF-beta-mediated synaptic growth regulation both pre- and postsynaptically via its function in endosomal storage regulation. Also required during oogenesis by regulating yolk spheres storage. The sequence is that of Protein spinster (spin) from Drosophila melanogaster (Fruit fly).